Here is a 112-residue protein sequence, read N- to C-terminus: Toxin-like structure LSTX-D10 (112 aa).

Positions 1–20 (MMKVLVVVALLVTLISYSSS) are cleaved as a signal peptide. A propeptide spanning residues 21–41 (EGIDDLEADELLSLMANEQTR) is cleaved from the precursor. Disulfide bonds link Cys-45-Cys-60, Cys-52-Cys-69, Cys-59-Cys-84, and Cys-71-Cys-82.

This sequence belongs to the neurotoxin 19 (CSTX) family. 01 subfamily. As to expression, expressed by the venom gland.

It is found in the secreted. The chain is Toxin-like structure LSTX-D10 from Lycosa singoriensis (Wolf spider).